The primary structure comprises 292 residues: Acetylglutamate kinase (292 aa).

Substrate is bound by residues glycine 62–glycine 63, arginine 84, and asparagine 188.

Belongs to the acetylglutamate kinase family. ArgB subfamily.

The protein localises to the cytoplasm. It catalyses the reaction N-acetyl-L-glutamate + ATP = N-acetyl-L-glutamyl 5-phosphate + ADP. It participates in amino-acid biosynthesis; L-arginine biosynthesis; N(2)-acetyl-L-ornithine from L-glutamate: step 2/4. In terms of biological role, catalyzes the ATP-dependent phosphorylation of N-acetyl-L-glutamate. This Methanosarcina mazei (strain ATCC BAA-159 / DSM 3647 / Goe1 / Go1 / JCM 11833 / OCM 88) (Methanosarcina frisia) protein is Acetylglutamate kinase.